Reading from the N-terminus, the 60-residue chain is Large ribosomal subunit protein bL32 (60 aa).

Belongs to the bacterial ribosomal protein bL32 family.

The protein is Large ribosomal subunit protein bL32 of Streptococcus pneumoniae serotype 19F (strain G54).